A 780-amino-acid polypeptide reads, in one-letter code: MAPKSSSSGSKKKSSASSNSADAKASKFKLPAEFITRPHPSKDHGKETCTAYIHPNVLSSLEINPGSFCTVGKIGENGILVIARAGDEEVHPVNVITLSTTIRSVGNLILGDRLELKKAQVQPPYATKVTVGSLQGYNILECMEEKVIQKLLDDSGVIMPGMIFQNLKTKAGDESIDVVITDASDDSLPDVSQLDLNMDDMYGGLDNLFYLSPPFIFRKGSTHITFSKETQANRKYNLPEPLSYAAVGGLDKEIESLKSAIEIPLHQPTLFSSFGVSPPRGILLHGPPGTGKTMLLRVVANTSNAHVLTINGPSIVSKYLGETEAALRDIFNEARKYQPSIIFIDEIDSIAPNRANDDSGEVESRVVATLLTLMDGMGAAGKVVVIAATNRPNSVDPALRRPGRFDQEVEIGIPDVDARFDILTKQFSRMSSDRHVLDSEAIKYIASKTHGYVGADLTALCRESVMKTIQRGLGTDANIDKFSLKVTLKDVESAMVDIRPSAMREIFLEMPKVYWSDIGGQEELKTKMKEMIQLPLEASETFARLGISAPKGVLLYGPPGCSKTLTAKALATESGINFLAVKGPEIFNKYVGESERAIREIFRKARSAAPSIIFFDEIDALSPDRDGSSTSAANHVLTSLLNEIDGVEELKGVVIVAATNRPDEIDAALLRPGRLDRHIYVGPPDVNARLEILKKCTKKFNTEESGVDLHELADRTEGYSGAEVVLLCQEAGLAAIMEDLDVAKVELRHFEKAFKGIARGITPEMLSYYEEFALRSGSSS.

A compositionally biased stretch (low complexity) spans M1 to A23. The interval M1 to S26 is disordered. Residues G286–T293 and G557–T564 each bind ATP.

This sequence belongs to the AAA ATPase family. AFG2 subfamily. In terms of assembly, homohexamer; ATP binding induces oligomerization. Forms a ring-shaped particle of about 12 nm diameter, that displays 6-fold radial symmetry. Associates with cytoplasmic pre-60S ribosomal particles containing ARX1, ALB1, RLP24 and NOG1. Binds to pre-60S ribosomal particles soon after their export from the nucleus and is released before REI1 and LSG1 are incorporated into the particles. Hexameric form interacts with RLP24 (via C-terminal); the interaction recruits AFG2 to pre-60S ribosomal particles and promotes AFG2 ATPase activity and RLP24 release from pre-60S ribosomal particles. Interacts (via N-terminus) with nucleoporin NUP116 (via N-terminus); the interaction is required for RLP24 release from pre-60S ribosomal particles.

It localises to the cytoplasm. The enzyme catalyses ATP + H2O = ADP + phosphate + H(+). The hexamer is activated by RLP24 during pre-60S ribosomal particle maturation; RLP24 activates ATPase activity of both ATP-binding regions and increases cooperativity between AFG2 subunits. The second ATP-binding region is inhibited by diazaborine; the inhibition requires prior ATP binding specifically to the second ATP-binding region. ATP-dependent chaperone which uses the energy provided by ATP hydrolysis to generate mechanical force to disassemble protein complexes. Plays an essential role in the cytoplasmic maturation steps of pre-60S ribosomal particles by promoting the release of shuttling protein RLP24 from the pre-ribosomal particles. This step facilitates the subsequent release of other shuttling proteins such as NOG1 and allows the transition of the pre-ribosomal particles to later maturation forms that bind REI1. Essential for viability. The sequence is that of ATPase family gene 2 protein from Saccharomyces cerevisiae (strain ATCC 204508 / S288c) (Baker's yeast).